A 355-amino-acid chain; its full sequence is S-adenosylmethionine:tRNA ribosyltransferase-isomerase (355 aa).

It belongs to the QueA family. Monomer.

Its subcellular location is the cytoplasm. It catalyses the reaction 7-aminomethyl-7-carbaguanosine(34) in tRNA + S-adenosyl-L-methionine = epoxyqueuosine(34) in tRNA + adenine + L-methionine + 2 H(+). The protein operates within tRNA modification; tRNA-queuosine biosynthesis. Transfers and isomerizes the ribose moiety from AdoMet to the 7-aminomethyl group of 7-deazaguanine (preQ1-tRNA) to give epoxyqueuosine (oQ-tRNA). The polypeptide is S-adenosylmethionine:tRNA ribosyltransferase-isomerase (Gluconacetobacter diazotrophicus (strain ATCC 49037 / DSM 5601 / CCUG 37298 / CIP 103539 / LMG 7603 / PAl5)).